Reading from the N-terminus, the 465-residue chain is 23S rRNA (uracil(1939)-C(5))-methyltransferase RlmD (465 aa).

A disordered region spans residues methionine 1–alanine 22. One can recognise a TRAM domain in the interval proline 16 to aspartate 80. Residues cysteine 93, cysteine 99, cysteine 102, and cysteine 181 each contribute to the [4Fe-4S] cluster site. S-adenosyl-L-methionine is bound by residues glutamine 289, phenylalanine 318, asparagine 323, glutamate 339, asparagine 367, and aspartate 388. Residue cysteine 421 is the Nucleophile of the active site.

This sequence belongs to the class I-like SAM-binding methyltransferase superfamily. RNA M5U methyltransferase family. RlmD subfamily.

It carries out the reaction uridine(1939) in 23S rRNA + S-adenosyl-L-methionine = 5-methyluridine(1939) in 23S rRNA + S-adenosyl-L-homocysteine + H(+). Catalyzes the formation of 5-methyl-uridine at position 1939 (m5U1939) in 23S rRNA. The sequence is that of 23S rRNA (uracil(1939)-C(5))-methyltransferase RlmD from Burkholderia cenocepacia (strain HI2424).